The chain runs to 215 residues: Large ribosomal subunit protein bL25 (215 aa).

Positions 1-10 (MAKSASNQLR) are enriched in polar residues. Disordered regions lie at residues 1 to 25 (MAKS…SRRA) and 187 to 215 (ELEG…GESE).

This sequence belongs to the bacterial ribosomal protein bL25 family. CTC subfamily. Part of the 50S ribosomal subunit; part of the 5S rRNA/L5/L18/L25 subcomplex. Contacts the 5S rRNA. Binds to the 5S rRNA independently of L5 and L18.

In terms of biological role, this is one of the proteins that binds to the 5S RNA in the ribosome where it forms part of the central protuberance. This chain is Large ribosomal subunit protein bL25, found in Mycobacterium bovis (strain ATCC BAA-935 / AF2122/97).